The following is a 617-amino-acid chain: Electron transfer flavoprotein-ubiquinone oxidoreductase, mitochondrial (617 aa).

Residues 1-33 (MQVLLARLACPVYQCFHAIKIKKNYLPLCATRW) constitute a mitochondrion transit peptide. Position 71–85 (71–85 (VVIVGAGPAGLSAAA)) interacts with FAD. The residue at position 96 (Lys96) is an N6-acetyllysine. Residues 109 to 130 (IGAHTLSGACLDPRALQELFPD) lie within the membrane without spanning it. 2 positions are modified to N6-acetyllysine: Lys132 and Lys223. Residues Gly305 and Gly306 each coordinate a ubiquinone. Lys357 bears the N6-acetyllysine mark. Residues 428–447 (IGLDVTEYEDNLKKSWVWKE) lie within the membrane without spanning it. Ser551 carries the post-translational modification Phosphoserine. Residues Cys561, Cys586, Cys589, and Cys592 each coordinate [4Fe-4S] cluster. Residues 577–606 (FRLQINAQNCVHCKTCDIKDPSQNINWVVP) enclose the 4Fe-4S ferredoxin-type domain.

It belongs to the ETF-QO/FixC family. As to quaternary structure, monomer. [4Fe-4S] cluster is required as a cofactor. FAD serves as cofactor.

It is found in the mitochondrion inner membrane. It catalyses the reaction a ubiquinone + reduced [electron-transfer flavoprotein] = a ubiquinol + oxidized [electron-transfer flavoprotein] + H(+). Its function is as follows. Accepts electrons from ETF and reduces ubiquinone. In Bos taurus (Bovine), this protein is Electron transfer flavoprotein-ubiquinone oxidoreductase, mitochondrial (ETFDH).